We begin with the raw amino-acid sequence, 233 residues long: C-type lectin domain-containing protein 87 (233 aa).

Positions 1–20 (MRFFRFLVFPVIAGLSSVLA) are cleaved as a signal peptide. N-linked (GlcNAc...) asparagine glycosylation occurs at asparagine 26. O-linked (Xyl...) (chondroitin sulfate) serine glycosylation is present at serine 32. An N-linked (GlcNAc...) asparagine glycan is attached at asparagine 81. One can recognise a C-type lectin domain in the interval 93 to 223 (FADSCYWIET…CTYLLYSICE (131 aa)). 2 disulfide bridges follow: cysteine 114–cysteine 222 and cysteine 193–cysteine 214. Asparagine 225 carries N-linked (GlcNAc...) asparagine glycosylation.

This chain is C-type lectin domain-containing protein 87, found in Caenorhabditis briggsae.